A 305-amino-acid polypeptide reads, in one-letter code: uncharacterized protein (305 aa).

A helical membrane pass occupies residues 8–28; sequence IGALVTAVIAIGIVFSHMILF.

It is found in the membrane. This is an uncharacterized protein from Bacillus subtilis (strain 168).